The chain runs to 370 residues: Anthranilate phosphoribosyltransferase (370 aa).

The segment at Met1–Trp27 is disordered. Residues Gly107, Gly110 to Asp111, Thr115, Asn117 to Thr120, Lys135 to Ser143, and Gly147 contribute to the 5-phospho-alpha-D-ribose 1-diphosphate site. Anthranilate is bound at residue Gly107. Ser119 provides a ligand contact to Mg(2+). Asn138 contacts anthranilate. Arg193 serves as a coordination point for anthranilate. Mg(2+) is bound by residues Asp251 and Glu252.

The protein belongs to the anthranilate phosphoribosyltransferase family. In terms of assembly, homodimer. Mg(2+) serves as cofactor.

The catalysed reaction is N-(5-phospho-beta-D-ribosyl)anthranilate + diphosphate = 5-phospho-alpha-D-ribose 1-diphosphate + anthranilate. It participates in amino-acid biosynthesis; L-tryptophan biosynthesis; L-tryptophan from chorismate: step 2/5. In terms of biological role, catalyzes the transfer of the phosphoribosyl group of 5-phosphorylribose-1-pyrophosphate (PRPP) to anthranilate to yield N-(5'-phosphoribosyl)-anthranilate (PRA). This Mycobacterium bovis (strain ATCC BAA-935 / AF2122/97) protein is Anthranilate phosphoribosyltransferase.